The chain runs to 44 residues: Thymosin beta-4 (44 aa).

Over residues 1–25 (MSDKPDMAEIEKFDKSKLKKTETQE) the composition is skewed to basic and acidic residues. Residues 1–44 (MSDKPDMAEIEKFDKSKLKKTETQEKNPLPSKETIEQEKQAGES) are disordered. N-acetylserine is present on Ser-2. The residue at position 2 (Ser-2) is a Phosphoserine. The residue at position 4 (Lys-4) is an N6-acetyllysine. Lys-12 bears the N6-acetyllysine; alternate mark. Lys-12 is covalently cross-linked (Glycyl lysine isopeptide (Lys-Gly) (interchain with G-Cter in SUMO2); alternate). Phosphothreonine is present on Thr-23. N6-acetyllysine is present on Lys-26. The residue at position 31 (Ser-31) is a Phosphoserine. Position 32 is an N6-acetyllysine (Lys-32). Residues 33-44 (ETIEQEKQAGES) are compositionally biased toward basic and acidic residues. The residue at position 34 (Thr-34) is a Phosphothreonine. Lys-39 bears the N6-acetyllysine mark.

It belongs to the thymosin beta family. Identified in a complex composed of ACTA1, COBL, GSN AND TMSB4X. Interacts with SERPINB1. In terms of processing, acSDKP is inactivated by ACE, which removes the dipeptide Lys-Pro from its C-terminus.

The protein localises to the cytoplasm. It is found in the cytoskeleton. Plays an important role in the organization of the cytoskeleton. Binds to and sequesters actin monomers (G actin) and therefore inhibits actin polymerization. Functionally, potent inhibitor of bone marrow derived stem cell differentiation. Acts by inhibits the entry of hematopoietic pluripotent stem cells into the S-phase. The polypeptide is Thymosin beta-4 (TMSB4) (Bos taurus (Bovine)).